Consider the following 392-residue polypeptide: Ceramide phosphoethanolamine synthase (392 aa).

At Met1–Lys10 the chain is on the lumenal side. The helical transmembrane segment at Ile11 to Tyr31 threads the bilayer. At Leu32–Arg140 the chain is on the cytoplasmic side. Residues Ser59–Thr82 show a composition bias toward low complexity. Residues Ser59–Gln91 form a disordered region. The helical transmembrane segment at Ser141–Gly161 threads the bilayer. At Lys162–Tyr212 the chain is on the lumenal side. Residues Val213–Leu233 traverse the membrane as a helical segment. At Lys234–Lys271 the chain is on the cytoplasmic side. The chain crosses the membrane as a helical span at residues Asn272–Asn288. Topologically, residues Arg289–Trp319 are lumenal. The helical transmembrane segment at Phe320–Leu340 threads the bilayer. The Cytoplasmic portion of the chain corresponds to Leu341–Arg356. Residues Tyr357–Ala377 traverse the membrane as a helical segment. Residues Gln378–Leu392 lie on the Lumenal side of the membrane.

The protein belongs to the CDP-alcohol phosphatidyltransferase class-I family. The cofactor is Mn(2+).

Its subcellular location is the membrane. The protein localises to the golgi apparatus membrane. It localises to the cell membrane. The catalysed reaction is CDP-ethanolamine + an N-acylsphing-4-enine = an N-acylsphing-4-enine 1-phosphoethanolamine + CMP + H(+). It catalyses the reaction CDP-ethanolamine + an N-acyl-sphingoid base = an N-acyl-sphingoid 1-phosphoethanolamine + CMP + H(+). Catalyzes the biosynthesis of ceramide phosphoethanolamine (CPE) through the transfer of a phosphatidyl head group from cytidine 5'-diphosphate (CDP)-ethanolamine on to the primary hydroxyl of ceramide. This Drosophila melanogaster (Fruit fly) protein is Ceramide phosphoethanolamine synthase.